A 140-amino-acid polypeptide reads, in one-letter code: ATP synthase epsilon chain (140 aa).

This sequence belongs to the ATPase epsilon chain family. F-type ATPases have 2 components, CF(1) - the catalytic core - and CF(0) - the membrane proton channel. CF(1) has five subunits: alpha(3), beta(3), gamma(1), delta(1), epsilon(1). CF(0) has three main subunits: a, b and c.

It is found in the cell inner membrane. Its function is as follows. Produces ATP from ADP in the presence of a proton gradient across the membrane. This Colwellia maris protein is ATP synthase epsilon chain.